Consider the following 538-residue polypeptide: Atos homolog protein B (538 aa).

Residues 1–18 show a composition bias toward low complexity; the sequence is MRHVQAEPSPSSEPEAGP. Disordered regions lie at residues 1 to 103, 156 to 185, and 197 to 308; these read MRHV…GLLG, HTRD…QLHT, and GGKS…PMGR. Pro residues predominate over residues 227-238; sequence HTPPGPGPPGPC. A phosphoserine mark is found at serine 254 and serine 255. Residues 274–286 show a composition bias toward polar residues; that stretch reads AANSSDAKATSFW. Positions 348–430 are required for macropage invasion; the sequence is LLGNFEESLL…VPKVGTVQVT (83 aa). The segment at 436-444 is transactivation domain 1 (TAD1); it reads QTVVKMFLV.

The protein belongs to the ATOS family.

It is found in the nucleus. In terms of biological role, transcription regulator that may syncronize transcriptional and translational programs. In Macaca fascicularis (Crab-eating macaque), this protein is Atos homolog protein B.